A 316-amino-acid chain; its full sequence is MVETQMDKLGFLLNHIGKQITTKVLSNAHITQNMKEIILEKDSVDGGAAKNVSKGKSSPKEKKHWTEFESWEQLSKSKRSFKEYWAERNEIVNTLLLNWDNVRGALKKFLNDDREWCGRINMINGVPEIVEIIPSPYKAGENIYFGSEAMIPAEIYSRVANKPAMFVFHTHPNLGSCCGGMPSICDISTTLRYLLMGWTAGHLIISSNQVGMLTVDKRIIIDLWANENPRWLMAQKILDIFMMLTSRRSLVHPWTLRDLKKILQDYGIEYIIFPSNDFFIYEDERLLMFSKKWTNFFTLHELLDDLETIETKASST.

This sequence belongs to the asfivirus F317L family.

The protein localises to the virion. This is an uncharacterized protein from Ornithodoros (relapsing fever ticks).